The sequence spans 467 residues: Probable Xaa-Pro aminopeptidase SMAC_04549 (467 aa).

D263, D274, E397, and E437 together coordinate Mn(2+).

This sequence belongs to the peptidase M24B family. Requires Mn(2+) as cofactor.

The enzyme catalyses Release of any N-terminal amino acid, including proline, that is linked to proline, even from a dipeptide or tripeptide.. Catalyzes the removal of a penultimate prolyl residue from the N-termini of peptides. The sequence is that of Probable Xaa-Pro aminopeptidase SMAC_04549 from Sordaria macrospora (strain ATCC MYA-333 / DSM 997 / K(L3346) / K-hell).